We begin with the raw amino-acid sequence, 140 residues long: Ribonuclease P protein component (140 aa).

This sequence belongs to the RnpA family. Consists of a catalytic RNA component (M1 or rnpB) and a protein subunit.

The catalysed reaction is Endonucleolytic cleavage of RNA, removing 5'-extranucleotides from tRNA precursor.. Its function is as follows. RNaseP catalyzes the removal of the 5'-leader sequence from pre-tRNA to produce the mature 5'-terminus. It can also cleave other RNA substrates such as 4.5S RNA. The protein component plays an auxiliary but essential role in vivo by binding to the 5'-leader sequence and broadening the substrate specificity of the ribozyme. The protein is Ribonuclease P protein component of Nostoc punctiforme (strain ATCC 29133 / PCC 73102).